A 249-amino-acid chain; its full sequence is 2,3-bisphosphoglycerate-dependent phosphoglycerate mutase (249 aa).

Substrate-binding positions include 9–16 (RHGQSQWN), 22–23 (TG), Arg-61, 88–91 (ERHY), Lys-99, 115–116 (RR), and 184–185 (GN). His-10 (tele-phosphohistidine intermediate) is an active-site residue. Catalysis depends on Glu-88, which acts as the Proton donor/acceptor.

The protein belongs to the phosphoglycerate mutase family. BPG-dependent PGAM subfamily. In terms of assembly, homodimer.

The catalysed reaction is (2R)-2-phosphoglycerate = (2R)-3-phosphoglycerate. Its pathway is carbohydrate degradation; glycolysis; pyruvate from D-glyceraldehyde 3-phosphate: step 3/5. Catalyzes the interconversion of 2-phosphoglycerate and 3-phosphoglycerate. The protein is 2,3-bisphosphoglycerate-dependent phosphoglycerate mutase of Xanthomonas campestris pv. campestris (strain B100).